Here is a 295-residue protein sequence, read N- to C-terminus: Regucalcin (295 aa).

Glu18 serves as a coordination point for a divalent metal cation. Substrate contacts are provided by Arg100, Asn102, and Asp120. A divalent metal cation-binding residues include Asn150 and Asp200. Asp200 functions as the Proton donor/acceptor in the catalytic mechanism.

It belongs to the SMP-30/CGR1 family. Zn(2+) is required as a cofactor. It depends on Mn(2+) as a cofactor. The cofactor is Ca(2+). Mg(2+) serves as cofactor.

The protein localises to the cytoplasm. The catalysed reaction is D-glucono-1,5-lactone + H2O = D-gluconate + H(+). It functions in the pathway cofactor biosynthesis; L-ascorbate biosynthesis via UDP-alpha-D-glucuronate pathway; L-ascorbate from UDP-alpha-D-glucuronate: step 3/4. Its function is as follows. Gluconolactonase with low activity towards other sugar lactones, including gulonolactone and galactonolactone. Catalyzes a key step in ascorbic acid (vitamin C) biosynthesis. Can also hydrolyze diisopropyl phosphorofluoridate and phenylacetate (in vitro). Calcium-binding protein. Modulates Ca(2+) signaling, and Ca(2+)-dependent cellular processes and enzyme activities. The protein is Regucalcin of Danio rerio (Zebrafish).